Reading from the N-terminus, the 171-residue chain is Flavodoxin (171 aa).

A Flavodoxin-like domain is found at 4 to 165; sequence IGIFFGSDTG…RIKQWVKQII (162 aa).

This sequence belongs to the flavodoxin family. The cofactor is FMN.

In terms of biological role, low-potential electron donor to a number of redox enzymes. The protein is Flavodoxin (fldA) of Buchnera aphidicola subsp. Acyrthosiphon pisum (strain APS) (Acyrthosiphon pisum symbiotic bacterium).